Consider the following 271-residue polypeptide: Probable ribosome biogenesis GTPase A (271 aa).

Residues 21 to 175 enclose the CP-type G domain; sequence HDQLKKLASS…LSDTPGVFFK (155 aa). GTP contacts are provided by residues 127–132 and Gly171; that span reads NVGKSS.

Belongs to the TRAFAC class YlqF/YawG GTPase family. MTG1 subfamily.

The protein localises to the cytoplasm. Its function is as follows. Required for a late step of 50S ribosomal subunit assembly. Has GTPase activity. Binds to the 23S rRNA. The sequence is that of Probable ribosome biogenesis GTPase A (rbgA) from Mycoplasma pneumoniae (strain ATCC 29342 / M129 / Subtype 1) (Mycoplasmoides pneumoniae).